The sequence spans 108 residues: Histone H4 (108 aa).

Residues 1-36 (MSSAQSRGGKTGGKVGGKVGAKRHKKTQKEHINGIT) form a disordered region. Positions 9 to 19 (GKTGGKVGGKV) are enriched in gly residues.

This sequence belongs to the histone H4 family. In terms of assembly, the nucleosome is a histone octamer containing two molecules each of H2A, H2B, H3 and H4 assembled in one H3-H4 heterotetramer and two H2A-H2B heterodimers. The octamer wraps approximately 147 bp of DNA.

It is found in the nucleus. The protein localises to the chromosome. Its function is as follows. Core component of nucleosome. Nucleosomes wrap and compact DNA into chromatin, limiting DNA accessibility to the cellular machineries which require DNA as a template. Histones thereby play a central role in transcription regulation, DNA repair, DNA replication and chromosomal stability. DNA accessibility is regulated via a complex set of post-translational modifications of histones, also called histone code, and nucleosome remodeling. The protein is Histone H4 (H4a) of Dictyostelium discoideum (Social amoeba).